The primary structure comprises 216 residues: Thiopurine S-methyltransferase (216 aa).

Residues Trp10, Leu45, Glu66, and Arg123 each contribute to the S-adenosyl-L-methionine site.

This sequence belongs to the class I-like SAM-binding methyltransferase superfamily. TPMT family.

It is found in the cytoplasm. The enzyme catalyses S-adenosyl-L-methionine + a thiopurine = S-adenosyl-L-homocysteine + a thiopurine S-methylether.. This Pseudomonas entomophila (strain L48) protein is Thiopurine S-methyltransferase.